The following is a 109-amino-acid chain: Flagellar hook-basal body complex protein FliE (109 aa).

The interval 1 to 38 (MQAIHNDKSLLSPFSELNTDNRTKREESGNAFKEQKGG) is disordered. Positions 19-38 (TDNRTKREESGNAFKEQKGG) are enriched in basic and acidic residues.

The protein belongs to the FliE family.

Its subcellular location is the bacterial flagellum basal body. The sequence is that of Flagellar hook-basal body complex protein FliE from Helicobacter pylori (strain G27).